The following is a 243-amino-acid chain: MRVNWEEKTEKLVNWLREKTREANASGLLVGLSGGVDSAVVATLIKKAFPEKSLGIIMPCFSNPEDEEDARMIANHLNLKYIVVNLDEPYQALVSSLKNATPHEPEKLALANIKPRLRMTTLYYWAANLNYLVAGTGNRTELEIGYFTKWGDGGVDLLPIGNLTKTEVWEFARYLGLPEKIITKAPSAGLWEGQTDEGEMGFTYKDIDHYLLTGEGSAELVDFVKRMQRKSQHKKRIPEVPML.

31–38 (GLSGGVDS) contributes to the ATP binding site. Asp37 serves as a coordination point for Mg(2+). Deamido-NAD(+) is bound at residue Arg116. Thr136 is a binding site for ATP. Glu141 lines the Mg(2+) pocket. Deamido-NAD(+)-binding residues include Lys149 and Asp156. Residues Lys165 and Ser187 each contribute to the ATP site. 233–234 (HK) is a deamido-NAD(+) binding site.

The protein belongs to the NAD synthetase family. Homodimer.

The catalysed reaction is deamido-NAD(+) + NH4(+) + ATP = AMP + diphosphate + NAD(+) + H(+). The protein operates within cofactor biosynthesis; NAD(+) biosynthesis; NAD(+) from deamido-NAD(+) (ammonia route): step 1/1. In terms of biological role, catalyzes the ATP-dependent amidation of deamido-NAD to form NAD. Uses ammonia as a nitrogen source. The protein is NH(3)-dependent NAD(+) synthetase of Carboxydothermus hydrogenoformans (strain ATCC BAA-161 / DSM 6008 / Z-2901).